The primary structure comprises 132 residues: Protein NrdI (132 aa).

It belongs to the NrdI family.

Probably involved in ribonucleotide reductase function. This chain is Protein NrdI, found in Staphylococcus aureus (strain Mu3 / ATCC 700698).